We begin with the raw amino-acid sequence, 126 residues long: Large ribosomal subunit protein bL19 (126 aa).

It belongs to the bacterial ribosomal protein bL19 family.

In terms of biological role, this protein is located at the 30S-50S ribosomal subunit interface and may play a role in the structure and function of the aminoacyl-tRNA binding site. The protein is Large ribosomal subunit protein bL19 of Thiobacillus denitrificans (strain ATCC 25259 / T1).